The following is a 239-amino-acid chain: Transcription factor MYB10 (239 aa).

HTH myb-type domains are found at residues 11–63 (KSQV…INYL) and 64–118 (RPGL…KKRL). DNA-binding regions (H-T-H motif) lie at residues 39-63 (WRSL…INYL) and 91-114 (WSKI…NTHL).

Expressed in cauline leaves and siliques.

It localises to the nucleus. Its function is as follows. Involved in metal ions homeostasis, including iron ions (Fe) acquisition, via the regulation of NAS4 and NAS2 genes expression. Necessary for plant survival in alkaline soil where iron availability is greatly restricted. Triggers tolerance to nickel (Ni) and zinc (Zn) ions. This chain is Transcription factor MYB10, found in Arabidopsis thaliana (Mouse-ear cress).